Consider the following 135-residue polypeptide: ATP synthase epsilon chain (135 aa).

The protein belongs to the ATPase epsilon chain family. F-type ATPases have 2 components, CF(1) - the catalytic core - and CF(0) - the membrane proton channel. CF(1) has five subunits: alpha(3), beta(3), gamma(1), delta(1), epsilon(1). CF(0) has three main subunits: a, b and c.

The protein localises to the cell inner membrane. Produces ATP from ADP in the presence of a proton gradient across the membrane. The protein is ATP synthase epsilon chain of Chelativorans sp. (strain BNC1).